The chain runs to 485 residues: Benzaldehyde dehydrogenase YfmT (485 aa).

231-236 lines the NAD(+) pocket; the sequence is GSTKVG. Catalysis depends on residues E253 and C287.

Belongs to the aldehyde dehydrogenase family.

The catalysed reaction is benzaldehyde + NAD(+) + H2O = benzoate + NADH + 2 H(+). It carries out the reaction vanillin + NAD(+) + H2O = vanillate + NADH + 2 H(+). Functionally, a benzaldehyde dehydrogenase able to act on substrates with 3- and 4-hydroxy and methoxy substitutions; converts vanillin (4-hydroxy-3-methoxybenzaldehyde) to vanillic acid in vitro. The physiological substrate is unknown. This is Benzaldehyde dehydrogenase YfmT (yfmT) from Bacillus subtilis (strain 168).